We begin with the raw amino-acid sequence, 81 residues long: Cytotoxin (81 aa).

Residues 1–21 form the signal peptide; it reads MKTLLLTTVVVTIVCLDLEYT. Intrachain disulfides connect Cys24/Cys42, Cys35/Cys59, Cys63/Cys74, and Cys75/Cys80.

Belongs to the three-finger toxin family. Short-chain subfamily. Type IA cytotoxin sub-subfamily. As to quaternary structure, monomer in solution; Homodimer and oligomer in the presence of negatively charged lipids forming a pore with a size ranging between 20 and 30 Angstroms. Expressed by the venom gland.

It is found in the secreted. It localises to the target cell membrane. Its function is as follows. Shows cytolytic activity on many different cells by forming pore in lipid membranes. In vivo, increases heart rate or kills the animal by cardiac arrest. In addition, it binds to heparin with high affinity, interacts with Kv channel-interacting protein 1 (KCNIP1) in a calcium-independent manner, and binds to integrin alpha-V/beta-3 (ITGAV/ITGB3) with moderate affinity. The protein is Cytotoxin of Naja sputatrix (Malayan spitting cobra).